Consider the following 429-residue polypeptide: Enolase (429 aa).

Q167 is a binding site for (2R)-2-phosphoglycerate. E209 (proton donor) is an active-site residue. Mg(2+) is bound by residues D246, E289, and D316. K341, R370, S371, and K392 together coordinate (2R)-2-phosphoglycerate. K341 (proton acceptor) is an active-site residue.

It belongs to the enolase family. As to quaternary structure, component of the RNA degradosome, a multiprotein complex involved in RNA processing and mRNA degradation. Mg(2+) is required as a cofactor.

Its subcellular location is the cytoplasm. It is found in the secreted. It localises to the cell surface. The enzyme catalyses (2R)-2-phosphoglycerate = phosphoenolpyruvate + H2O. The protein operates within carbohydrate degradation; glycolysis; pyruvate from D-glyceraldehyde 3-phosphate: step 4/5. In terms of biological role, catalyzes the reversible conversion of 2-phosphoglycerate (2-PG) into phosphoenolpyruvate (PEP). It is essential for the degradation of carbohydrates via glycolysis. The protein is Enolase of Pseudomonas putida (strain ATCC 47054 / DSM 6125 / CFBP 8728 / NCIMB 11950 / KT2440).